A 206-amino-acid polypeptide reads, in one-letter code: Ras-related protein Ral-A (206 aa).

Residues 24-29 (GVGKSA), 40-46 (VEDYEPT), and 127-130 (NKSD) each bind GTP. Positions 43–51 (YEPTKADSY) match the Effector region motif. T46 is a glycosylation site ((Microbial infection) O-linked (Glc) threonine; by P.sordellii toxin TcsL). At S194 the chain carries Phosphoserine; by AURKA. C203 is subject to Cysteine methyl ester. The S-geranylgeranyl cysteine moiety is linked to residue C203. Positions 204–206 (CIL) are cleaved as a propeptide — removed in mature form.

This sequence belongs to the small GTPase superfamily. Ras family. In terms of assembly, interacts (via effector domain) with RALBP1; during mitosis, recruits RALBP1 to the mitochondrion where it promotes DNM1L phosphorylation and mitochondrial fission. Interacts with EXOC2/Sec5 and EXOC8/Exo84; binding to EXOC2 and EXOC8 is mutually exclusive. Interacts with Clostridium exoenzyme C3. Interacts with RALGPS1. Interacts with LPAR1 and LPAR2. Interacts with GRK2 in response to LPAR1 activation. RALA and GRK2 binding to LPAR1 is mutually exclusive. Interacts with CDC42. Phosphorylated. Phosphorylation at Ser-194 by AURKA/Aurora kinase A, during mitosis, induces RALA localization to the mitochondrion where it regulates mitochondrial fission. In terms of processing, prenylation is essential for membrane localization. The geranylgeranylated form and the farnesylated mutant do not undergo alternative prenylation in response to geranylgeranyltransferase I inhibitors (GGTIs) and farnesyltransferase I inhibitors (FTIs). Post-translationally, (Microbial infection) Glucosylated at Thr-46 by P.sordellii toxin TcsL from strain 6018. Monoglucosylation completely prevents the recognition of the downstream effector, blocking the GTPases in their inactive form. Not glucosylated by TcsL from strain VPI 9048.

It is found in the cell membrane. Its subcellular location is the cleavage furrow. The protein localises to the midbody. It localises to the midbody ring. The protein resides in the mitochondrion. The catalysed reaction is GTP + H2O = GDP + phosphate + H(+). Alternates between an inactive form bound to GDP and an active form bound to GTP. Activated by a guanine nucleotide-exchange factor (GEF) and inactivated by a GTPase-activating protein (GAP). Functionally, multifunctional GTPase involved in a variety of cellular processes including gene expression, cell migration, cell proliferation, oncogenic transformation and membrane trafficking. Accomplishes its multiple functions by interacting with distinct downstream effectors. Acts as a GTP sensor for GTP-dependent exocytosis of dense core vesicles. The RALA-exocyst complex regulates integrin-dependent membrane raft exocytosis and growth signaling. Key regulator of LPAR1 signaling and competes with GRK2 for binding to LPAR1 thus affecting the signaling properties of the receptor. Required for anchorage-independent proliferation of transformed cells. During mitosis, supports the stabilization and elongation of the intracellular bridge between dividing cells. Cooperates with EXOC2 to recruit other components of the exocyst to the early midbody. During mitosis, also controls mitochondrial fission by recruiting to the mitochondrion RALBP1, which mediates the phosphorylation and activation of DNM1L by the mitotic kinase cyclin B-CDK1. This Homo sapiens (Human) protein is Ras-related protein Ral-A (RALA).